An 805-amino-acid polypeptide reads, in one-letter code: Probable inorganic carbon transporter subunit DabA (805 aa).

Residues Cys-334, Asp-336, His-491, and Cys-506 each coordinate Zn(2+).

It belongs to the inorganic carbon transporter (TC 9.A.2) DabA family. As to quaternary structure, forms a complex with DabB. Zn(2+) serves as cofactor.

It is found in the cell inner membrane. Functionally, part of an energy-coupled inorganic carbon pump. In Ruegeria sp. (strain TM1040) (Silicibacter sp.), this protein is Probable inorganic carbon transporter subunit DabA.